We begin with the raw amino-acid sequence, 243 residues long: L-fucose operon activator (243 aa).

Positions 1–57 (MKAARQQAIVDLLLNHTSLTTEALSEQLKVSKETIRRDLNELQTQGKILRNHGRAKY) constitute an HTH deoR-type domain. The segment at residues 19–38 (LTTEALSEQLKVSKETIRRD) is a DNA-binding region (H-T-H motif).

Transcriptional activator of the fuc operon. This chain is L-fucose operon activator (fucR), found in Escherichia coli (strain K12).